A 216-amino-acid polypeptide reads, in one-letter code: Ribose-5-phosphate isomerase A (216 aa).

Residues 26 to 29 (TGST), 79 to 82 (DGAD), and 92 to 95 (KGGG) contribute to the substrate site. Glu-101 functions as the Proton acceptor in the catalytic mechanism. Position 119 (Lys-119) interacts with substrate.

This sequence belongs to the ribose 5-phosphate isomerase family. In terms of assembly, homodimer.

It carries out the reaction aldehydo-D-ribose 5-phosphate = D-ribulose 5-phosphate. It participates in carbohydrate degradation; pentose phosphate pathway; D-ribose 5-phosphate from D-ribulose 5-phosphate (non-oxidative stage): step 1/1. Catalyzes the reversible conversion of ribose-5-phosphate to ribulose 5-phosphate. The polypeptide is Ribose-5-phosphate isomerase A (Legionella pneumophila subsp. pneumophila (strain Philadelphia 1 / ATCC 33152 / DSM 7513)).